The chain runs to 520 residues: Transactivator/viroplasmin protein (520 aa).

Disordered stretches follow at residues Ser103–Pro126 and Glu487–Asp520.

This sequence belongs to the caulimoviridae viroplasmin family.

The protein resides in the host cytoplasm. Its function is as follows. Enhances the ribosomal termination-reinitiation event leading to the translation of major open reading frames on the polycistronic viral RNAs. In Arabidopsis thaliana (Mouse-ear cress), this protein is Transactivator/viroplasmin protein.